The primary structure comprises 368 residues: Agmatine deiminase (368 aa).

Catalysis depends on Cys-357, which acts as the Amidino-cysteine intermediate.

The protein belongs to the agmatine deiminase family. As to quaternary structure, homodimer.

It catalyses the reaction agmatine + H2O = N-carbamoylputrescine + NH4(+). It functions in the pathway amine and polyamine biosynthesis; putrescine biosynthesis via agmatine pathway; N-carbamoylputrescine from agmatine: step 1/1. Its function is as follows. Mediates the hydrolysis of agmatine into N-carbamoylputrescine in the arginine decarboxylase (ADC) pathway of putrescine biosynthesis, a basic polyamine. The chain is Agmatine deiminase from Pseudomonas syringae pv. syringae (strain B728a).